Consider the following 78-residue polypeptide: Large ribosomal subunit protein bL28 (78 aa).

The interval 1 to 20 is disordered; sequence MSRVCQVTGKGPVTGNNISH.

The protein belongs to the bacterial ribosomal protein bL28 family.

In Stutzerimonas stutzeri (strain A1501) (Pseudomonas stutzeri), this protein is Large ribosomal subunit protein bL28.